The sequence spans 488 residues: Proline--tRNA ligase (488 aa).

This sequence belongs to the class-II aminoacyl-tRNA synthetase family. ProS type 3 subfamily. As to quaternary structure, homodimer.

The protein localises to the cytoplasm. The catalysed reaction is tRNA(Pro) + L-proline + ATP = L-prolyl-tRNA(Pro) + AMP + diphosphate. Functionally, catalyzes the attachment of proline to tRNA(Pro) in a two-step reaction: proline is first activated by ATP to form Pro-AMP and then transferred to the acceptor end of tRNA(Pro). The protein is Proline--tRNA ligase of Symbiobacterium thermophilum (strain DSM 24528 / JCM 14929 / IAM 14863 / T).